A 280-amino-acid chain; its full sequence is MNKLLNIAQAGHRQFVREYAFKSDLKIKWMRPEKIACYKPEKSGDLAKLPPLKADELLPEYRDCKELDKADESVKSLFKLSNNASYLTTKFYRDEMVKEVQRHAQDFGSMEAKLAKMTAVIRRYQEHMDKHPRDKMIKVRLKELIDKRKKFLKYLRRWDYPRFEWILEKLDLVYKPPPTHFHWITRKESLQKLTDIYCENLKEERLEAYHKQLQAQQIPFLEEAIKKMQFVRQEQISCDVPVTVTEEKIADSKRQLEMLKELQQAEAAASSKKQNEDGFN.

This sequence belongs to the universal ribosomal protein uS15 family. Component of the mitochondrial ribosome small subunit (28S) which comprises a 12S rRNA and about 30 distinct proteins. As to expression, expressed in anterior and posterior midgut primordia in stage 11 embryos. In stage 13 embryos, expression is high in the developing midgut and hindgut. In stage 16 embryos, expression is elevated in the midgut, hindgut, and in a small region that will give rise to pharyngeal muscles and to the stomatogastric nervous system. In larvae, expression is predominant in the gut, and head, presumably in pharyngeal muscles.

The protein resides in the mitochondrion. In terms of biological role, essential for gut mitochondrial activity. Might be involved in tissue specific growth factor production. This is Small ribosomal subunit protein uS15m (bonsai) from Drosophila melanogaster (Fruit fly).